Here is a 312-residue protein sequence, read N- to C-terminus: Glyoxylate/hydroxypyruvate reductase A (312 aa).

Arginine 227 is an active-site residue. The active-site Proton donor is histidine 275.

Belongs to the D-isomer specific 2-hydroxyacid dehydrogenase family. GhrA subfamily.

Its subcellular location is the cytoplasm. It carries out the reaction glycolate + NADP(+) = glyoxylate + NADPH + H(+). The catalysed reaction is (R)-glycerate + NAD(+) = 3-hydroxypyruvate + NADH + H(+). It catalyses the reaction (R)-glycerate + NADP(+) = 3-hydroxypyruvate + NADPH + H(+). Catalyzes the NADPH-dependent reduction of glyoxylate and hydroxypyruvate into glycolate and glycerate, respectively. This chain is Glyoxylate/hydroxypyruvate reductase A, found in Escherichia coli O127:H6 (strain E2348/69 / EPEC).